Here is a 114-residue protein sequence, read N- to C-terminus: DNA-directed RNA polymerase subunit omega (114 aa).

Belongs to the RNA polymerase subunit omega family. In terms of assembly, the RNAP catalytic core consists of 2 alpha, 1 beta, 1 beta' and 1 omega subunit. When a sigma factor is associated with the core the holoenzyme is formed, which can initiate transcription.

It carries out the reaction RNA(n) + a ribonucleoside 5'-triphosphate = RNA(n+1) + diphosphate. Functionally, promotes RNA polymerase assembly. Latches the N- and C-terminal regions of the beta' subunit thereby facilitating its interaction with the beta and alpha subunits. This Novosphingobium aromaticivorans (strain ATCC 700278 / DSM 12444 / CCUG 56034 / CIP 105152 / NBRC 16084 / F199) protein is DNA-directed RNA polymerase subunit omega.